We begin with the raw amino-acid sequence, 553 residues long: Putative transport protein YidE (553 aa).

Helical transmembrane passes span 4 to 24 (IALT…IGNV), 28 to 48 (GVGL…HFVS), 65 to 85 (FGLI…FFAS), 95 to 115 (LFAV…HKLF), and 158 to 178 (MSYA…MWML). RCK C-terminal domains lie at 191-276 (QQHE…VIGQ) and 279-361 (DTSL…VLGN). 6 helical membrane passes run 371–391 (MLPV…PVFV), 393–413 (GFPA…ALIL), 439–459 (IVLF…HTLV), 464–484 (LSWI…VGIL), 493–513 (YLTM…LAFA), and 533–553 (LVMF…WSIG).

Belongs to the AAE transporter (TC 2.A.81) family. YidE subfamily.

It is found in the cell membrane. The sequence is that of Putative transport protein YidE from Escherichia coli O127:H6 (strain E2348/69 / EPEC).